The sequence spans 390 residues: Dual-specificity RNA methyltransferase RlmN (390 aa).

Catalysis depends on Glu110, which acts as the Proton acceptor. The 240-residue stretch at 116 to 355 folds into the Radical SAM core domain; it reads EADRATLCVS…VIIRKTRGDD (240 aa). A disulfide bridge connects residues Cys123 and Cys360. [4Fe-4S] cluster contacts are provided by Cys130, Cys134, and Cys137. S-adenosyl-L-methionine contacts are provided by residues 184–185, Ser216, 238–240, and Asn317; these read GE and SLH. Cys360 (S-methylcysteine intermediate) is an active-site residue.

Belongs to the radical SAM superfamily. RlmN family. [4Fe-4S] cluster is required as a cofactor.

Its subcellular location is the cytoplasm. The enzyme catalyses adenosine(2503) in 23S rRNA + 2 reduced [2Fe-2S]-[ferredoxin] + 2 S-adenosyl-L-methionine = 2-methyladenosine(2503) in 23S rRNA + 5'-deoxyadenosine + L-methionine + 2 oxidized [2Fe-2S]-[ferredoxin] + S-adenosyl-L-homocysteine. The catalysed reaction is adenosine(37) in tRNA + 2 reduced [2Fe-2S]-[ferredoxin] + 2 S-adenosyl-L-methionine = 2-methyladenosine(37) in tRNA + 5'-deoxyadenosine + L-methionine + 2 oxidized [2Fe-2S]-[ferredoxin] + S-adenosyl-L-homocysteine. In terms of biological role, specifically methylates position 2 of adenine 2503 in 23S rRNA and position 2 of adenine 37 in tRNAs. m2A2503 modification seems to play a crucial role in the proofreading step occurring at the peptidyl transferase center and thus would serve to optimize ribosomal fidelity. This is Dual-specificity RNA methyltransferase RlmN from Haemophilus influenzae (strain PittEE).